Consider the following 1030-residue polypeptide: MMS19 nucleotide excision repair protein homolog (1030 aa).

Ala2 is modified (N-acetylalanine). HEAT repeat units lie at residues 866-904 (QRFFTDNVPALVRGFHAAPQDVKPNYLKGLSHVLNRLPK), 908-946 (LPELPTLLSLLLEALSCPDSVVQLSTLSCLQPLLLEAPQ), 949-987 (SLHVDTLITKFLNLSASPSMAVRIAALQCMHALTRLPTP), and 990-1028 (LPYKPQVIRALAKPLDDKKRLVRKEAVSARGEWFLLGSP). Ser1027 bears the Phosphoserine mark.

This sequence belongs to the MET18/MMS19 family. As to quaternary structure, component of the CIA complex. In the CIA complex, interacts directly with CIAO2B and CIAO3. Component of the MMXD complex, composed of CIAO1, ERCC2, CIAO2B, MMS19 and SLC25A5. Interacts with CIAO2B; the interaction is direct. Interacts with ERCC2/XPD; the interaction is direct. Interacts with ERCC3/XPB and NCOA3/RAC3. Interacts with RTEL1; the interaction mediates the association of RTEL1 with the CIA complex. Interacts with BRIP1. Interacts with KIF4A; the interaction facilitates the transfer of Fe-S clusters to KIF4A to ensure proper localization of KIF4A to the mitotic machinery components. Interacts with CCDC117; the interaction is indirect. In terms of processing, ubiquitinated; undergoes 'Lys-48'-linked polyubiquitination.

Its subcellular location is the nucleus. The protein resides in the cytoplasm. It is found in the cytoskeleton. The protein localises to the spindle. In terms of biological role, key component of the cytosolic iron-sulfur protein assembly (CIA) complex, a multiprotein complex that mediates the incorporation of iron-sulfur cluster into apoproteins specifically involved in DNA metabolism and genomic integrity. In the CIA complex, MMS19 acts as an adapter between early-acting CIA components and a subset of cellular target Fe/S proteins such as ERCC2/XPD, FANCJ and RTEL1, thereby playing a key role in nucleotide excision repair (NER), homologous recombination-mediated double-strand break DNA repair, DNA replication and RNA polymerase II (POL II) transcription. As a CIA complex component and in collaboration with CIAO1 and CIAO2, binds to and facilitates the assembly of most cytosolic-nuclear Fe/S proteins. As part of the mitotic spindle-associated MMXD complex, plays a role in chromosome segregation, probably by facilitating iron-sulfur cluster assembly into ERCC2/XPD. Together with CIAO2, facilitates the transfer of Fe-S clusters to the motor protein KIF4A, which ensures proper localization of KIF4A to mitotic machinery components to promote the progression of mitosis. Indirectly acts as a transcriptional coactivator of estrogen receptor (ER), via its role in iron-sulfur insertion into some component of the TFIIH-machinery. This is MMS19 nucleotide excision repair protein homolog from Bos taurus (Bovine).